We begin with the raw amino-acid sequence, 469 residues long: Cell division protein FtsP (469 aa).

Positions 1 to 29 (MPRLSRRQLLKTAAISTALSTVPAPLLAA) form a signal peptide, tat-type signal. One can recognise a Plastocyanin-like domain in the interval 228–286 (IRLRLLNASLARAYDLRLDNDQEMLLIAQDLSFLPKAKSVKSLVLSPGERAEILVNMNE).

It belongs to the FtsP family. Post-translationally, predicted to be exported by the Tat system. The position of the signal peptide cleavage has not been experimentally proven.

Its subcellular location is the periplasm. Functionally, cell division protein that is required for growth during stress conditions. May be involved in protecting or stabilizing the divisomal assembly under conditions of stress. The polypeptide is Cell division protein FtsP (Haemophilus influenzae (strain 86-028NP)).